A 222-amino-acid polypeptide reads, in one-letter code: Small ribosomal subunit protein eS1 (222 aa).

The protein belongs to the eukaryotic ribosomal protein eS1 family.

This is Small ribosomal subunit protein eS1 from Methanocaldococcus jannaschii (strain ATCC 43067 / DSM 2661 / JAL-1 / JCM 10045 / NBRC 100440) (Methanococcus jannaschii).